Here is a 253-residue protein sequence, read N- to C-terminus: Oxidoreductase AOL_s00215g277 (253 aa).

Residues 181 to 203 traverse the membrane as a helical segment; the sequence is FFGYWLTVILGYYIGSLLGYQPF.

This sequence belongs to the oxidoreductase OpS7 family.

It is found in the membrane. The protein operates within secondary metabolite biosynthesis; terpenoid biosynthesis. Its function is as follows. Oxidoreductase; part of the gene cluster that mediates the biosynthesis of sesquiterpenyl epoxy-cyclohexenoids (SECs) such as anthrobotrisins and arthrosporols, metabolites that possess a novel hybrid carbon skeleton consisting of a polyketide-derived epoxycyclohexenol combined with a terpenoid-derived monocyclic sesquiterpenol substructure (PKS-PTS hybrid). The SEC pathway plays an important role for fungal soil colonization via decreasing fungal nematode-capturing ability. Within the pathway, the oxidoreductase AOL_s00215g277 seems to play a role in the farnesylation step of toluquinol to produce farnesyl hydroquinone, the hybrid precursor for biosynthesis of SECs. The pathway begins with the biosynthesis of 6-methylsalicylic acid (6-MSA), the first precursor of the polyketide-derived epoxycyclohexenol in arthrosporols, by the polyketide synthase (PKS) AOL_s00215g283 via condensation of 1 acetate and 3 malonate units. The 6-methylsalicylic acid decarboxylase AOL_s00215g281 then catalyzes the decarboxylation of 6-methylsalicylic acid to yield m-cresol. The cytochrome P450 monooxygenase AOL_s00215g282 further oxidizes m-cresol to yield toluquinol. With the assistance of the oxidoreductase AOL_s00215g277, the polyprenyl transferase AOL_s00215g276 catalyzes the farnesylation of toluquinol to produce farnesyl hydroquinone, the hybrid precursor for biosynthesis of SECs. Farnesyl hydroquinone undergoes epoxidation and then subsequent dehydrogenation to form farnesyl epoxy-quinone, the first and simplest SEC. The cytochrome P450 monooxygenase AOL_s00215g278 and the FAD-dependent monooxygenase AOL_s00215g279 might be involved in the oxygenation of the phenol moiety, most likely in the epoxy formation. The cytochrome P450 monooxygenases AOL_s00215g274 and AOL_s00215g280 are involved in specific regional ketone reductions at respectively C-4 and C-1 of farnesyl epoxy-quinone PubMed:33823587. The chain is Oxidoreductase AOL_s00215g277 from Arthrobotrys oligospora (strain ATCC 24927 / CBS 115.81 / DSM 1491) (Nematode-trapping fungus).